The following is a 1227-amino-acid chain: Anion exchange protein 3 (1227 aa).

Residues 1–11 show a composition bias toward pro residues; the sequence is MANGVIPPPGG. Disordered regions lie at residues 1–256, 286–312, and 428–497; these read MANG…DEAE, KPSR…KKKK, and NDDK…GDGH. The Cytoplasmic portion of the chain corresponds to 1–707; sequence MANGVIPPPG…DLRDALHSQC (707 aa). Residues 58-75 show a composition bias toward basic and acidic residues; that stretch reads DPEKPSRSYSERDFEFHR. 2 stretches are compositionally biased toward basic residues: residues 76-97 and 104-113; these read HTSH…KLRR and RHTRRKRKKE. Acidic residues predominate over residues 134–152; the sequence is AEEEEEEEEEEEGESEAEP. 4 positions are modified to phosphoserine: serine 167, serine 170, serine 175, and serine 198. Residues 194–215 show a composition bias toward low complexity; sequence QSDQSPQRSGSSPSPRARASRI. The residue at position 294 (arginine 294) is an Omega-N-methylarginine. Positions 435–448 are enriched in low complexity; it reads FFPRNPSSSSVNSV. A compositionally biased stretch (basic and acidic residues) spans 480–497; that stretch reads HDPDAKEKPLHMPGGDGH. The next 4 membrane-spanning stretches (helical) occupy residues 708–730, 736–773, 793–815, and 825–846; these read VAAV…GLLG, LMGV…LLVF, VWVG…SFLV, and IFAF…YKVF. Positions 708–1227 are membrane (anion exchange); that stretch reads VAAVLFIYFA…DEYNELHMPV (520 aa). An N-linked (GlcNAc...) asparagine glycan is attached at asparagine 868. Residues 888–905 traverse the membrane as a helical segment; that stretch reads ALLSLILMLGTFLIAFFL. Residues 906–920 lie on the Cytoplasmic side of the membrane; the sequence is RKFRNSRFLGGKARR. Helical transmembrane passes span 921–941, 975–997, 1023–1044, 1078–1123, and 1150–1186; these read IIGD…DYSI, PFPP…LIFM, LLLI…LTAA, VTGV…IQLS, and MHLF…TVPL. Cysteine 1160 carries S-palmitoyl cysteine lipidation.

This sequence belongs to the anion exchanger (TC 2.A.31) family. Expressed in the brain.

The protein resides in the cell membrane. It catalyses the reaction hydrogencarbonate(in) + chloride(out) = hydrogencarbonate(out) + chloride(in). Its activity is regulated as follows. Inhibited by 4,4'-diisothiocyanatostilbene-2,2'-disulfonic acid (DIDS). Its function is as follows. Sodium-independent anion exchanger which mediates the electroneutral exchange of chloride for bicarbonate ions across the cell membrane. May be involved in the regulation of intracellular pH, and the modulation of cardiac action potential. The chain is Anion exchange protein 3 (Slc4a3) from Mus musculus (Mouse).